The sequence spans 81 residues: Photosystem I iron-sulfur center (81 aa).

4Fe-4S ferredoxin-type domains are found at residues 2 to 31 and 39 to 68; these read SHTV…MVPW and IASA…VRVY. [4Fe-4S] cluster is bound by residues cysteine 11, cysteine 14, cysteine 17, cysteine 21, cysteine 48, cysteine 51, cysteine 54, and cysteine 58.

In terms of assembly, the eukaryotic PSI reaction center is composed of at least 11 subunits. [4Fe-4S] cluster serves as cofactor.

Its subcellular location is the plastid. It localises to the chloroplast thylakoid membrane. It carries out the reaction reduced [plastocyanin] + hnu + oxidized [2Fe-2S]-[ferredoxin] = oxidized [plastocyanin] + reduced [2Fe-2S]-[ferredoxin]. Functionally, apoprotein for the two 4Fe-4S centers FA and FB of photosystem I (PSI); essential for photochemical activity. FB is the terminal electron acceptor of PSI, donating electrons to ferredoxin. The C-terminus interacts with PsaA/B/D and helps assemble the protein into the PSI complex. Required for binding of PsaD and PsaE to PSI. PSI is a plastocyanin/cytochrome c6-ferredoxin oxidoreductase, converting photonic excitation into a charge separation, which transfers an electron from the donor P700 chlorophyll pair to the spectroscopically characterized acceptors A0, A1, FX, FA and FB in turn. This Chlorella vulgaris (Green alga) protein is Photosystem I iron-sulfur center.